Consider the following 289-residue polypeptide: Cuticle collagen 19 (289 aa).

Positions 1–18 (MGKLIVVGSCGVLVCVLA) are cleaved as a signal peptide. The tract at residues 95–289 (SEGCPAGPPG…PCPSRAAYKA (195 aa)) is disordered. 2 triple-helical region regions span residues 101–130 (GPPG…PGVI) and 147–269 (GRPG…KGED). Over residues 162–183 (GPAGGNGRRGPPGPVGGPGEQG) the composition is skewed to gly residues. Composition is skewed to low complexity over residues 184–207 (PQGD…GEPG) and 223–239 (PRGE…PGND).

This sequence belongs to the cuticular collagen family. As to quaternary structure, collagen polypeptide chains are complexed within the cuticle by disulfide bonds and other types of covalent cross-links.

Nematode cuticles are composed largely of collagen-like proteins. The cuticle functions both as an exoskeleton and as a barrier to protect the worm from its environment. This chain is Cuticle collagen 19 (col-19), found in Caenorhabditis elegans.